A 55-amino-acid polypeptide reads, in one-letter code: Large ribosomal subunit protein bL33 (55 aa).

The protein belongs to the bacterial ribosomal protein bL33 family.

This chain is Large ribosomal subunit protein bL33, found in Rhizobium johnstonii (strain DSM 114642 / LMG 32736 / 3841) (Rhizobium leguminosarum bv. viciae).